The following is a 464-amino-acid chain: Agamous-like MADS-box protein AGL92 (464 aa).

The MADS-box domain maps to 1–60; it reads MRTKTKLVLIPDRHFRRATFRKRNAGIRKKLHELTTLCDIKACAVIYSPFENPTVWPSTE. The stretch at 85 to 114 forms a coiled coil; that stretch reads ETFLRDQITKEQNKLESLRRENRETQLKHF. Residues 443–464 form a disordered region; sequence TSTGHMPSTTTTTTNNNNNNNV. The segment covering 451-464 has biased composition (low complexity); sequence TTTTTTNNNNNNNV.

In terms of assembly, interacts with AGL62.

It is found in the nucleus. Its function is as follows. Putative transcription factor. The chain is Agamous-like MADS-box protein AGL92 (AGL92) from Arabidopsis thaliana (Mouse-ear cress).